We begin with the raw amino-acid sequence, 30 residues long: Cycloviolacin-O1 (30 aa).

Residues 1–30 (GIPCAESCVYIPCTVTALLGCSCSNRVCYN) constitute a cross-link (cyclopeptide (Gly-Asn)). 3 disulfide bridges follow: Cys-4–Cys-21, Cys-8–Cys-23, and Cys-13–Cys-28.

Post-translationally, this is a cyclic peptide. In terms of tissue distribution, expressed in leaves, petals, petioles and roots but not in runners (at protein level).

Functionally, probably participates in a plant defense mechanism. The sequence is that of Cycloviolacin-O1 from Viola odorata (Sweet violet).